A 169-amino-acid chain; its full sequence is Der GTPase-activating protein YihI (169 aa).

Disordered regions lie at residues 1–98 and 144–169; these read MKPS…PQAE and GLSY…LRGN. Basic residues predominate over residues 10 to 19; the sequence is SKGHAKARRK. Basic and acidic residues predominate over residues 20-30; sequence TREELDQEARD. A compositionally biased stretch (basic residues) spans 31-40; sequence RKRLKKRRGH. The span at 49-58 shows a compositional bias: polar residues; that stretch reads GNTTSGSKGQ. The segment covering 147–159 has biased composition (acidic residues); that stretch reads YDDDEEEEEDEKQ. The segment covering 160-169 has biased composition (basic and acidic residues); sequence EDMMRLLRGN.

It belongs to the YihI family. As to quaternary structure, interacts with Der.

Functionally, a GTPase-activating protein (GAP) that modifies Der/EngA GTPase function. May play a role in ribosome biogenesis. This is Der GTPase-activating protein YihI from Escherichia coli O6:K15:H31 (strain 536 / UPEC).